The following is a 251-amino-acid chain: Putative (5-formylfuran-3-yl)methyl phosphate synthase (251 aa).

The active-site Schiff-base intermediate with substrate is the Lys-29. Residue Lys-87 is the Proton acceptor of the active site.

It belongs to the MfnB family.

The catalysed reaction is 2 D-glyceraldehyde 3-phosphate = 4-(hydroxymethyl)-2-furancarboxaldehyde phosphate + phosphate + 2 H2O. Functionally, catalyzes the formation of 4-(hydroxymethyl)-2-furancarboxaldehyde phosphate (4-HFC-P) from two molecules of glyceraldehyde-3-P (GA-3-P). The protein is Putative (5-formylfuran-3-yl)methyl phosphate synthase of Kitasatospora aureofaciens (Streptomyces aureofaciens).